The primary structure comprises 2148 residues: General transcription factor 3C polypeptide 1 (2148 aa).

Positions 473 to 487 (GEEAFLSDSESEEES) are enriched in acidic residues. Disordered stretches follow at residues 473-568 (GEEA…FDPH) and 587-609 (NPKE…KPHK). A compositionally biased stretch (basic residues) spans 491-502 (GKRRGRGSRGHS). Residue Lys533 forms a Glycyl lysine isopeptide (Lys-Gly) (interchain with G-Cter in SUMO2) linkage. Ser666 bears the Phosphoserine mark. Disordered regions lie at residues 717 to 771 (STAN…EKMG) and 818 to 863 (TGEQ…SSWE). Basic and acidic residues-rich tracts occupy residues 759–770 (ESTRVKKTDEKM) and 825–835 (HSERKTGKQEP). Glycyl lysine isopeptide (Lys-Gly) (interchain with G-Cter in SUMO2) cross-links involve residues Lys769 and Lys832. Position 1062 is a phosphoserine (Ser1062). Positions 1186 to 1195 (EHFELDREPT) are enriched in basic and acidic residues. Disordered regions lie at residues 1186–1238 (EHFE…KKLR), 1597–1627 (KSLG…SVEV), 1823–1881 (KASG…LPAK), 1893–1928 (SPRP…ESVG), and 2127–2148 (PRPS…ATSR). Thr1195 is subject to Phosphothreonine. Positions 1198–1214 (RNRKVRGGKSQKRKRLK) are enriched in basic residues. The span at 1228–1238 (EHPEAKSKKLR) shows a compositional bias: basic and acidic residues. The span at 1605 to 1616 (LDDDDEEEDLDE) shows a compositional bias: acidic residues. 3 positions are modified to phosphoserine: Ser1624, Ser1853, and Ser1893. The span at 1903 to 1912 (EAQAQFAAPE) shows a compositional bias: low complexity. Positions 2132–2148 (SCYQSSAQPSTGVATSR) are enriched in polar residues.

It belongs to the TFIIIC subunit 1 family. Part of the TFIIIC subcomplex TFIIIC2, consisting of six subunits, GTF3C1, GTF3C2, GTF3C3, GTF3C4, GTF3C5 and GTF3C6. Interacts with IGHMBP2. Interacts with MAF1.

It is found in the nucleus. In terms of biological role, required for RNA polymerase III-mediated transcription. Component of TFIIIC that initiates transcription complex assembly on tRNA and is required for transcription of 5S rRNA and other stable nuclear and cytoplasmic RNAs. Binds to the box B promoter element. The protein is General transcription factor 3C polypeptide 1 (Gtf3c1) of Rattus norvegicus (Rat).